The sequence spans 156 residues: Deoxyuridine 5'-triphosphate nucleotidohydrolase (156 aa).

Substrate contacts are provided by residues 76–78, Asn-89, 93–95, and Lys-103; these read RSG and TVD.

Belongs to the dUTPase family. It depends on Mg(2+) as a cofactor.

It carries out the reaction dUTP + H2O = dUMP + diphosphate + H(+). Its pathway is pyrimidine metabolism; dUMP biosynthesis; dUMP from dCTP (dUTP route): step 2/2. Its function is as follows. This enzyme is involved in nucleotide metabolism: it produces dUMP, the immediate precursor of thymidine nucleotides and it decreases the intracellular concentration of dUTP so that uracil cannot be incorporated into DNA. This is Deoxyuridine 5'-triphosphate nucleotidohydrolase from Agrobacterium fabrum (strain C58 / ATCC 33970) (Agrobacterium tumefaciens (strain C58)).